A 94-amino-acid chain; its full sequence is Co-chaperonin GroES (94 aa).

This sequence belongs to the GroES chaperonin family. As to quaternary structure, heptamer of 7 subunits arranged in a ring. Interacts with the chaperonin GroEL.

Its subcellular location is the cytoplasm. In terms of biological role, together with the chaperonin GroEL, plays an essential role in assisting protein folding. The GroEL-GroES system forms a nano-cage that allows encapsulation of the non-native substrate proteins and provides a physical environment optimized to promote and accelerate protein folding. GroES binds to the apical surface of the GroEL ring, thereby capping the opening of the GroEL channel. This chain is Co-chaperonin GroES, found in Exiguobacterium sibiricum (strain DSM 17290 / CCUG 55495 / CIP 109462 / JCM 13490 / 255-15).